The sequence spans 175 residues: Ribosome maturation factor RimM (175 aa).

The 80-residue stretch at Glu96 to Phe175 folds into the PRC barrel domain.

It belongs to the RimM family. As to quaternary structure, binds ribosomal protein uS19.

It is found in the cytoplasm. In terms of biological role, an accessory protein needed during the final step in the assembly of 30S ribosomal subunit, possibly for assembly of the head region. Essential for efficient processing of 16S rRNA. May be needed both before and after RbfA during the maturation of 16S rRNA. It has affinity for free ribosomal 30S subunits but not for 70S ribosomes. This is Ribosome maturation factor RimM from Aliivibrio fischeri (strain ATCC 700601 / ES114) (Vibrio fischeri).